The chain runs to 407 residues: Lysosome-associated membrane glycoprotein 1 (407 aa).

Residues 1–21 (MAAPGARRPLLLLLLAGLAHS) form the signal peptide. Residues 22–189 (APALFEVKDN…SKEETRCPQD (168 aa)) are first lumenal domain. The Lumenal segment spans residues 22–371 (APALFEVKDN…VEECVQDGNN (350 aa)). N-linked (GlcNAc...) asparagine glycosylation is found at asparagine 32, asparagine 59, asparagine 71, asparagine 79, asparagine 102, asparagine 116, asparagine 125, asparagine 145, asparagine 160, and asparagine 178. Cysteine 36 and cysteine 75 are oxidised to a cystine. Cysteine 150 and cysteine 186 form a disulfide bridge. The segment at 180–211 (SKEETRCPQDQPSPTTGPPSPSPPLVPTNPSV) is disordered. A hinge region spans residues 190–219 (QPSPTTGPPSPSPPLVPTNPSVSKYNVTGD). Positions 194–206 (TTGPPSPSPPLVP) are enriched in pro residues. N-linked (GlcNAc...) asparagine glycosylation is found at asparagine 215, asparagine 220, asparagine 233, asparagine 241, asparagine 271, asparagine 283, asparagine 297, and asparagine 312. A second lumenal domain region spans residues 220 to 371 (NGTCLLASMA…VEECVQDGNN (152 aa)). The cysteines at positions 223 and 260 are disulfide-linked. Cysteine 328 and cysteine 365 are disulfide-bonded. Residues 372-395 (MLIPIAVGGALAGLVLIVLIAYLI) form a helical membrane-spanning segment. The Cytoplasmic portion of the chain corresponds to 396 to 407 (GRKRSHAGYQTI).

The protein belongs to the LAMP family. Interacts with ABCB9; this interaction strongly stabilizes ABCB9 and protects ABCB9 against lysosomal degradation. Interacts with FURIN. Interacts with TMEM175; inhibiting the proton channel activity of TMEM175. Post-translationally, O- and N-glycosylated; some of the N-glycans attached to LAMP-1 are polylactosaminoglycans.

It is found in the lysosome membrane. The protein resides in the endosome membrane. The protein localises to the late endosome membrane. Its subcellular location is the cell membrane. It localises to the cytolytic granule membrane. Lysosomal membrane glycoprotein which plays an important role in lysosome biogenesis, lysosomal pH regulation, autophagy and cholesterol homeostasis. Acts as an important regulator of lysosomal lumen pH regulation by acting as a direct inhibitor of the proton channel TMEM175, facilitating lysosomal acidification for optimal hydrolase activity. Also plays an important role in NK-cells cytotoxicity. Mechanistically, participates in cytotoxic granule movement to the cell surface and perforin trafficking to the lytic granule. In addition, protects NK-cells from degranulation-associated damage induced by their own cytotoxic granule content. Presents carbohydrate ligands to selectins. The sequence is that of Lysosome-associated membrane glycoprotein 1 (Lamp1) from Rattus norvegicus (Rat).